The following is a 179-amino-acid chain: Small ribosomal subunit protein uS5 (179 aa).

The 64-residue stretch at Leu-13 to Val-76 folds into the S5 DRBM domain. Positions Asp-160–Ala-179 are disordered.

It belongs to the universal ribosomal protein uS5 family. As to quaternary structure, part of the 30S ribosomal subunit. Contacts proteins S4 and S8.

With S4 and S12 plays an important role in translational accuracy. Functionally, located at the back of the 30S subunit body where it stabilizes the conformation of the head with respect to the body. This chain is Small ribosomal subunit protein uS5, found in Chloroflexus aggregans (strain MD-66 / DSM 9485).